The primary structure comprises 279 residues: Bifunctional protein FolD (279 aa).

Residues 166–168 (GRS) and Ser-191 each bind NADP(+).

It belongs to the tetrahydrofolate dehydrogenase/cyclohydrolase family. Homodimer.

The enzyme catalyses (6R)-5,10-methylene-5,6,7,8-tetrahydrofolate + NADP(+) = (6R)-5,10-methenyltetrahydrofolate + NADPH. It carries out the reaction (6R)-5,10-methenyltetrahydrofolate + H2O = (6R)-10-formyltetrahydrofolate + H(+). The protein operates within one-carbon metabolism; tetrahydrofolate interconversion. In terms of biological role, catalyzes the oxidation of 5,10-methylenetetrahydrofolate to 5,10-methenyltetrahydrofolate and then the hydrolysis of 5,10-methenyltetrahydrofolate to 10-formyltetrahydrofolate. This Shouchella clausii (strain KSM-K16) (Alkalihalobacillus clausii) protein is Bifunctional protein FolD.